Here is a 485-residue protein sequence, read N- to C-terminus: Pumilio domain-containing protein 7 (485 aa).

The tract at residues 29-72 (NKTHKNKNPKPPVKLLPYRHGSNTTSSDSDSYIFNSGSGSSDAE) is disordered. Polar residues predominate over residues 49–71 (GSNTTSSDSDSYIFNSGSGSSDA). Pumilio repeat units follow at residues 86–124 (DVLL…AVFE), 128–163 (ESTT…ELLR), 164–200 (QMID…QLIQ), 201–236 (ELST…TFFV), 237–279 (HFLS…FRIQ), 287–324 (CIVR…TIID), 326–361 (CLLR…EMME), and 370–411 (DVES…RELP). Positions 439–454 (FSSGKKIIDSVMRHGV) are RNA-binding.

RNA-binding protein that binds to the consensus sequence 5'-CUCUGUAUCUUGU-3' in mRNA 3'-UTRs and modulates mRNA expression and stability. Functions redundantly with puf-5 and puf-6 in oocyte formation and organization, early embryonic cell divisions, and repression of expression of glp-1 and other maternal mRNAs in late oogenesis. This chain is Pumilio domain-containing protein 7, found in Caenorhabditis elegans.